We begin with the raw amino-acid sequence, 118 residues long: Ribonuclease P protein component (118 aa).

Belongs to the RnpA family. Consists of a catalytic RNA component (M1 or rnpB) and a protein subunit.

It carries out the reaction Endonucleolytic cleavage of RNA, removing 5'-extranucleotides from tRNA precursor.. Functionally, RNaseP catalyzes the removal of the 5'-leader sequence from pre-tRNA to produce the mature 5'-terminus. It can also cleave other RNA substrates such as 4.5S RNA. The protein component plays an auxiliary but essential role in vivo by binding to the 5'-leader sequence and broadening the substrate specificity of the ribozyme. The protein is Ribonuclease P protein component of Vibrio campbellii (strain ATCC BAA-1116).